Consider the following 397-residue polypeptide: Subtilisin-like serine protease Pen ch 13.0101 (397 aa).

The N-terminal stretch at 1 to 19 is a signal peptide; it reads MGFLKVLATSLATLAVVDA. Positions 20 to 115 are cleaved as a propeptide — removed in mature form; it reads GTLLTASNTD…IEPDMIVNAT (96 aa). Residues 35–113 form the Inhibitor I9 domain; sequence SYIVVMNDDV…KYIEPDMIVN (79 aa). Residue asparagine 113 is glycosylated (N-linked (GlcNAc...) asparagine). A Peptidase S8 domain is found at 125 to 397; it reads SWGLARISSK…SKLLYNGINV (273 aa). Active-site charge relay system residues include aspartate 157 and histidine 188. Asparagine 249 and asparagine 284 each carry an N-linked (GlcNAc...) asparagine glycan. Catalysis depends on serine 343, which acts as the Charge relay system.

The protein belongs to the peptidase S8 family.

The protein resides in the secreted. Serine protease. The polypeptide is Subtilisin-like serine protease Pen ch 13.0101 (Penicillium rubens).